Reading from the N-terminus, the 182-residue chain is Testis development-related protein (182 aa).

Disordered regions lie at residues 1–71 (MWKL…TNVR) and 117–152 (TDHT…SASS). Ser-7 carries the post-translational modification Phosphoserine. Positions 22–37 (RGASPASAAAQAPGAS) are enriched in low complexity. Residues 49–58 (NKDDEERLLE) are compositionally biased toward basic and acidic residues. Over residues 59-68 (TSRSSKSKGT) the composition is skewed to polar residues.

Belongs to the TDRP family. In terms of assembly, interacts with PRM2. As to expression, predominantly expressed in testis.

Its subcellular location is the nucleus. It is found in the cytoplasm. In terms of biological role, contributes to normal sperm motility, but not essential for male fertility. This chain is Testis development-related protein (Tdrp), found in Rattus norvegicus (Rat).